Here is a 414-residue protein sequence, read N- to C-terminus: Serine/threonine transporter SstT (414 aa).

The next 8 membrane-spanning stretches (helical) occupy residues 22 to 42 (GLVL…TIGF), 54 to 74 (IFVK…VMAA), 89 to 109 (IIVL…IAGF), 148 to 168 (AIFK…GLAL), 189 to 209 (IVHV…AETL), 223 to 243 (LLAV…PILV), 305 to 325 (MAGA…TLGL), and 337 to 357 (IVAA…LLLI).

Belongs to the dicarboxylate/amino acid:cation symporter (DAACS) (TC 2.A.23) family.

The protein localises to the cell inner membrane. It catalyses the reaction L-serine(in) + Na(+)(in) = L-serine(out) + Na(+)(out). It carries out the reaction L-threonine(in) + Na(+)(in) = L-threonine(out) + Na(+)(out). Functionally, involved in the import of serine and threonine into the cell, with the concomitant import of sodium (symport system). The chain is Serine/threonine transporter SstT from Haemophilus influenzae (strain PittEE).